The following is a 243-amino-acid chain: Probable HTH-type transcriptional regulator GfsR (243 aa).

Residues 154–179 (AAVARPDTSGSATGRTGDSSPSLALS) form a disordered region. The span at 161–178 (TSGSATGRTGDSSPSLAL) shows a compositional bias: polar residues. Residues 171-236 (DSSPSLALSP…QALLRWLGHP (66 aa)) enclose the HTH luxR-type domain. Positions 195–214 (VREIAVEMRLAEKTVRNYLS) form a DNA-binding region, H-T-H motif.

It functions in the pathway antibiotic biosynthesis. In terms of biological role, probable DNA-binding protein that contributes to the control of expression of the biosynthesis operon of the 16-membered macrolide antibiotics FD-891 and FD-892. Might be a member of a two-component regulatory system; the putative sensor kinase gene is unknown. In Streptomyces halstedii, this protein is Probable HTH-type transcriptional regulator GfsR.